The chain runs to 122 residues: Transcription initiation factor IIA subunit 2 (122 aa).

Serine 95 and serine 102 each carry phosphoserine.

It belongs to the TFIIA subunit 2 family. As to quaternary structure, TFIIA is a heterodimer composed of the large TOA1 and a small TOA2 subunits. Interacts with TBP. Interacts with TAF11. Interacts with KAP122.

It localises to the cytoplasm. Its subcellular location is the nucleus. Its function is as follows. TFIIA is a component of the transcription machinery of RNA polymerase II and plays an important role in transcriptional activation. TFIIA in a complex with TBP mediates transcriptional activity. This Saccharomyces cerevisiae (strain ATCC 204508 / S288c) (Baker's yeast) protein is Transcription initiation factor IIA subunit 2 (TOA2).